The sequence spans 427 residues: Trigger factor (427 aa).

Positions 163 to 248 (GDTVVIDFVG…VHEVKAKEVP (86 aa)) constitute a PPIase FKBP-type domain.

It belongs to the FKBP-type PPIase family. Tig subfamily.

The protein resides in the cytoplasm. The enzyme catalyses [protein]-peptidylproline (omega=180) = [protein]-peptidylproline (omega=0). Involved in protein export. Acts as a chaperone by maintaining the newly synthesized protein in an open conformation. Functions as a peptidyl-prolyl cis-trans isomerase. The polypeptide is Trigger factor (Streptococcus equi subsp. zooepidemicus (strain MGCS10565)).